A 354-amino-acid chain; its full sequence is Probable L-ascorbate-6-phosphate lactonase UlaG (354 aa).

Belongs to the UlaG family. A divalent metal cation serves as cofactor.

It is found in the cytoplasm. The catalysed reaction is L-ascorbate 6-phosphate + H2O = 3-dehydro-L-gulonate 6-phosphate. It participates in cofactor degradation; L-ascorbate degradation; D-xylulose 5-phosphate from L-ascorbate: step 1/4. Probably catalyzes the hydrolysis of L-ascorbate-6-P into 3-keto-L-gulonate-6-P. Is essential for L-ascorbate utilization under anaerobic conditions. This is Probable L-ascorbate-6-phosphate lactonase UlaG from Salmonella choleraesuis (strain SC-B67).